The primary structure comprises 318 residues: Bifunctional protein FolD 3 (318 aa).

Residues 173-175 (GRS) and Ile242 contribute to the NADP(+) site.

The protein belongs to the tetrahydrofolate dehydrogenase/cyclohydrolase family. As to quaternary structure, homodimer.

It catalyses the reaction (6R)-5,10-methylene-5,6,7,8-tetrahydrofolate + NADP(+) = (6R)-5,10-methenyltetrahydrofolate + NADPH. The enzyme catalyses (6R)-5,10-methenyltetrahydrofolate + H2O = (6R)-10-formyltetrahydrofolate + H(+). It functions in the pathway one-carbon metabolism; tetrahydrofolate interconversion. In terms of biological role, catalyzes the oxidation of 5,10-methylenetetrahydrofolate to 5,10-methenyltetrahydrofolate and then the hydrolysis of 5,10-methenyltetrahydrofolate to 10-formyltetrahydrofolate. In Rubrobacter xylanophilus (strain DSM 9941 / JCM 11954 / NBRC 16129 / PRD-1), this protein is Bifunctional protein FolD 3.